We begin with the raw amino-acid sequence, 736 residues long: Glycogen [starch] synthase, muscle (736 aa).

Position 8 is a phosphoserine; by AMPK and PKA (Ser8). Position 11 is a phosphoserine (Ser11). Lys39 contacts UDP. Residues His205 and Arg211 each coordinate UDP-alpha-D-glucose. Alpha-D-glucose 6-phosphate contacts are provided by His291, Glu292, Gln294, His297, and Lys301. UDP is bound at residue Arg331. Arg331 serves as a coordination point for UDP-alpha-D-glucose. Ser412 is modified (phosphoserine). Residue His501 coordinates alpha-D-glucose 6-phosphate. UDP-alpha-D-glucose contacts are provided by Glu510, Trp512, and Gly513. Thr515 serves as a coordination point for UDP. Arg582 and Arg586 together coordinate alpha-D-glucose 6-phosphate. A disordered region spans residues 631 to 736 (TQGYRYPRPA…PASSLGEERN (106 aa)). A Phosphoserine; by DYRK2, GSK3-alpha, GSK3-beta and PASK modification is found at Ser641. Phosphoserine; by GSK3-alpha and GSK3-beta is present on residues Ser645 and Ser649. Ser652 bears the Phosphoserine mark. Position 653 is a phosphoserine; by GSK3-alpha and GSK3-beta (Ser653). Ser657 is modified (phosphoserine; by CK2). Over residues 658–681 (EDEEEPRDLPPDEDDERYDEDEEA) the composition is skewed to acidic residues. Residues 682 to 695 (AKDRRNIRAPEWPR) show a composition bias toward basic and acidic residues. Phosphoserine is present on Ser698. Thr700 carries the post-translational modification Phosphothreonine. Ser709 carries the phosphoserine modification. Over residues 714-727 (PSSSVSTPSEPLSP) the composition is skewed to low complexity. Position 720 is a phosphothreonine (Thr720). Ser726 and Ser730 each carry phosphoserine.

This sequence belongs to the glycosyltransferase 3 family. As to quaternary structure, part of the GYS1-GYG1 complex, a heterooctamer composed of a tetramer of GYS1 and 2 dimers of GYG1, where each GYS1 protomer binds to one GYG1 subunit (via GYG1 C-terminus); the GYS1 tetramer may dissociate from GYG1 dimers to continue glycogen polymerization on its own. Post-translationally, phosphorylation at Ser-8 by AMPK inactivates the enzyme activity. Primed phosphorylation at Ser-657 (site 5) by CSNK2A1 and CSNK2A2 is required for inhibitory phosphorylation at Ser-641 (site 3a), Ser-645 (site 3b), Ser-649 (site 3c) and Ser-653 (site 4) by GSK3A an GSK3B. Phosphorylated at Ser-641 by PASK, leading to inactivation; phosphorylation by PASK is inhibited by glycogen. Phosphorylated at Ser-641 by DYRK2, leading to inactivation. Dephosphorylation at Ser-641 and Ser-645 by PP1 activates the enzyme.

It catalyses the reaction [(1-&gt;4)-alpha-D-glucosyl](n) + UDP-alpha-D-glucose = [(1-&gt;4)-alpha-D-glucosyl](n+1) + UDP + H(+). Its pathway is glycan biosynthesis; glycogen biosynthesis. With respect to regulation, allosteric activation by glucose-6-phosphate. Phosphorylation reduces the activity towards UDP-glucose. When in the non-phosphorylated state, glycogen synthase does not require glucose-6-phosphate as an allosteric activator; when phosphorylated it does. Functionally, glycogen synthase participates in the glycogen biosynthetic process along with glycogenin and glycogen branching enzyme. Extends the primer composed of a few glucose units formed by glycogenin by adding new glucose units to it. In this context, glycogen synthase transfers the glycosyl residue from UDP-Glc to the non-reducing end of alpha-1,4-glucan. In Bos taurus (Bovine), this protein is Glycogen [starch] synthase, muscle (GYS1).